The primary structure comprises 313 residues: Ribosomal protein L11 methyltransferase (313 aa).

Residues Thr163, Gly184, Asp206, and Asn249 each contribute to the S-adenosyl-L-methionine site.

It belongs to the methyltransferase superfamily. PrmA family.

Its subcellular location is the cytoplasm. The catalysed reaction is L-lysyl-[protein] + 3 S-adenosyl-L-methionine = N(6),N(6),N(6)-trimethyl-L-lysyl-[protein] + 3 S-adenosyl-L-homocysteine + 3 H(+). Methylates ribosomal protein L11. This Brevibacillus brevis (strain 47 / JCM 6285 / NBRC 100599) protein is Ribosomal protein L11 methyltransferase.